Consider the following 263-residue polypeptide: MHKGTFHMSRLTDTLAAKLEEAGITQAELARRVGQSQQAINNLFAGRAASSMVWRELARELGIDEQEMRQMMTEAGRDPEKVTSLAGLRKYRAVLPSPREPFPIIRQQEHLPRPNATIGEETNMEPRKKKLLPVLGEAVGGEDGEYIFNGSVLDYVDCPPSLENVPNAYAVYIDGESMVPRFRPGETVWVHPTKPPRRGDDVVIQIHPDNEDDGAPPRGFVKEFVGWTANKLVLQQYNPTKKIEFTREQVVSVHPIILAGKYW.

The region spanning 15 to 68 (LAAKLEEAGITQAELARRVGQSQQAINNLFAGRAASSMVWRELARELGIDEQEM) is the HTH cro/C1-type domain. The H-T-H motif DNA-binding region spans 26–45 (QAELARRVGQSQQAINNLFA).

In Rhizobium phage 16-3 (Bacteriophage 16-3), this protein is Repressor protein C (C).